The primary structure comprises 642 residues: Threonine--tRNA ligase (642 aa).

Residues 1–61 (MPVITLPDGS…ENDAQLAIIT (61 aa)) form the TGS domain. Residues 243–534 (DHRKIGKQLD…LTEEFAGFFP (292 aa)) form a catalytic region. Residue Lys-286 is modified to N6-acetyllysine. Zn(2+)-binding residues include Cys-334, His-385, and His-511.

It belongs to the class-II aminoacyl-tRNA synthetase family. Homodimer. The cofactor is Zn(2+).

Its subcellular location is the cytoplasm. It carries out the reaction tRNA(Thr) + L-threonine + ATP = L-threonyl-tRNA(Thr) + AMP + diphosphate + H(+). In terms of biological role, catalyzes the attachment of threonine to tRNA(Thr) in a two-step reaction: L-threonine is first activated by ATP to form Thr-AMP and then transferred to the acceptor end of tRNA(Thr). Also edits incorrectly charged L-seryl-tRNA(Thr). The polypeptide is Threonine--tRNA ligase (Escherichia fergusonii (strain ATCC 35469 / DSM 13698 / CCUG 18766 / IAM 14443 / JCM 21226 / LMG 7866 / NBRC 102419 / NCTC 12128 / CDC 0568-73)).